Here is a 777-residue protein sequence, read N- to C-terminus: Subtilisin-like protease SBT3.7 (777 aa).

An N-terminal signal peptide occupies residues 1-22 (MRNHRTSIFVVLSLVIILNGQS). The propeptide at 23–113 (GFLPRAGAES…VIPDRFYKPA (91 aa)) is activation peptide. An Inhibitor I9 domain is found at 34–111 (VHIVYLGEKQ…VHVIPDRFYK (78 aa)). Residues 117-624 (TWDYLGLSPT…GGLVNPEKAT (508 aa)) form the Peptidase S8 domain. N-linked (GlcNAc...) asparagine glycosylation occurs at asparagine 133. Aspartate 147 serves as the catalytic Charge relay system. Residues asparagine 180 and asparagine 206 are each glycosylated (N-linked (GlcNAc...) asparagine). Histidine 222 functions as the Charge relay system in the catalytic mechanism. 4 N-linked (GlcNAc...) asparagine glycosylation sites follow: asparagine 237, asparagine 397, asparagine 412, and asparagine 540. One can recognise a PA domain in the interval 386 to 481 (SLVYPENPGN…ELGTYILFYI (96 aa)). Serine 555 serves as the catalytic Charge relay system. N-linked (GlcNAc...) asparagine glycans are attached at residues asparagine 647, asparagine 723, and asparagine 758.

This sequence belongs to the peptidase S8 family.

Its subcellular location is the secreted. This is Subtilisin-like protease SBT3.7 from Arabidopsis thaliana (Mouse-ear cress).